We begin with the raw amino-acid sequence, 129 residues long: Cytochrome c oxidase subunit 5B, mitochondrial (129 aa).

The transit peptide at 1–31 (MASRLLRGVGALASQALRARGPNGVSVVRSM) directs the protein to the mitochondrion. N6-acetyllysine occurs at positions 68 and 86. Zn(2+)-binding residues include C91, C93, C113, and C116. K121 is subject to N6-acetyllysine.

Belongs to the cytochrome c oxidase subunit 5B family. As to quaternary structure, component of the cytochrome c oxidase (complex IV, CIV), a multisubunit enzyme composed of 14 subunits. The complex is composed of a catalytic core of 3 subunits MT-CO1, MT-CO2 and MT-CO3, encoded in the mitochondrial DNA, and 11 supernumerary subunits COX4I1 (or COX4I2), COX5A, COX5B, COX6A2 (or COX6A1), COX6B1 (or COX6B2), COX6C, COX7A1 (or COX7A2), COX7B, COX7C, COX8B and NDUFA4, which are encoded in the nuclear genome. The complex exists as a monomer or a dimer and forms supercomplexes (SCs) in the inner mitochondrial membrane with NADH-ubiquinone oxidoreductase (complex I, CI) and ubiquinol-cytochrome c oxidoreductase (cytochrome b-c1 complex, complex III, CIII), resulting in different assemblies (supercomplex SCI(1)III(2)IV(1) and megacomplex MCI(2)III(2)IV(2)).

It localises to the mitochondrion inner membrane. The protein operates within energy metabolism; oxidative phosphorylation. Component of the cytochrome c oxidase, the last enzyme in the mitochondrial electron transport chain which drives oxidative phosphorylation. The respiratory chain contains 3 multisubunit complexes succinate dehydrogenase (complex II, CII), ubiquinol-cytochrome c oxidoreductase (cytochrome b-c1 complex, complex III, CIII) and cytochrome c oxidase (complex IV, CIV), that cooperate to transfer electrons derived from NADH and succinate to molecular oxygen, creating an electrochemical gradient over the inner membrane that drives transmembrane transport and the ATP synthase. Cytochrome c oxidase is the component of the respiratory chain that catalyzes the reduction of oxygen to water. Electrons originating from reduced cytochrome c in the intermembrane space (IMS) are transferred via the dinuclear copper A center (CU(A)) of subunit 2 and heme A of subunit 1 to the active site in subunit 1, a binuclear center (BNC) formed by heme A3 and copper B (CU(B)). The BNC reduces molecular oxygen to 2 water molecules using 4 electrons from cytochrome c in the IMS and 4 protons from the mitochondrial matrix. The polypeptide is Cytochrome c oxidase subunit 5B, mitochondrial (COX5B) (Bos taurus (Bovine)).